The primary structure comprises 236 residues: Leucyl/phenylalanyl-tRNA--protein transferase (236 aa).

It belongs to the L/F-transferase family.

It is found in the cytoplasm. It catalyses the reaction N-terminal L-lysyl-[protein] + L-leucyl-tRNA(Leu) = N-terminal L-leucyl-L-lysyl-[protein] + tRNA(Leu) + H(+). The catalysed reaction is N-terminal L-arginyl-[protein] + L-leucyl-tRNA(Leu) = N-terminal L-leucyl-L-arginyl-[protein] + tRNA(Leu) + H(+). It carries out the reaction L-phenylalanyl-tRNA(Phe) + an N-terminal L-alpha-aminoacyl-[protein] = an N-terminal L-phenylalanyl-L-alpha-aminoacyl-[protein] + tRNA(Phe). Its function is as follows. Functions in the N-end rule pathway of protein degradation where it conjugates Leu, Phe and, less efficiently, Met from aminoacyl-tRNAs to the N-termini of proteins containing an N-terminal arginine or lysine. This Vibrio campbellii (strain ATCC BAA-1116) protein is Leucyl/phenylalanyl-tRNA--protein transferase.